The chain runs to 557 residues: Probable protein kinase UbiB (557 aa).

In terms of domain architecture, Protein kinase spans 121–509 (SFDTVPLASA…RKLQTRVVTA (389 aa)). ATP contacts are provided by residues 127–135 (LASASIAQV) and lysine 154. Catalysis depends on aspartate 289, which acts as the Proton acceptor. 2 consecutive transmembrane segments (helical) span residues 506–526 (VVTA…YGLH) and 535–555 (VPVW…VAWL).

The protein belongs to the ABC1 family. UbiB subfamily.

The protein localises to the cell inner membrane. It participates in cofactor biosynthesis; ubiquinone biosynthesis [regulation]. Functionally, is probably a protein kinase regulator of UbiI activity which is involved in aerobic coenzyme Q (ubiquinone) biosynthesis. The sequence is that of Probable protein kinase UbiB from Xanthomonas axonopodis pv. citri (strain 306).